The following is a 933-amino-acid chain: Bromodomain testis-specific protein (933 aa).

The segment at 1–21 (MSMSSRHLHSSIVNPPPPEYI) is disordered. One can recognise a Bromo 1 domain in the interval 28 to 134 (RLTNQLQYLE…KVFMEKIAEM (107 aa)). Positions 214–225 (KGIKRKADTTTP) match the Nuclear localization signal motif. A disordered region spans residues 235-263 (ESSPTLSEPKPNKILSGTEKTRSAETSAV). In terms of domain architecture, Bromo 2 spans 278 to 385 (NQICEQLKHC…DVFEGMFAKI (108 aa)). 3 disordered regions span residues 398–425 (RYKTSTEESSSSSSSEQSSSSDSEDERA), 576–610 (KPSSIKSLKSKEQLNKEKKQELEKRLRDVSGQLSS), and 627–662 (GGPSRLSESSTSSSASDVSNSSDSSSSDSSDSESAT). The segment covering 404 to 418 (EESSSSSSSEQSSSS) has biased composition (low complexity). Residues 423 to 448 (ERAQHLALLQEQLRAVQEQLKALTET) are a coiled coil. The NET domain maps to 495–577 (VSDEEEDVKP…VCLRKRPKKP (83 aa)). Residues 584-603 (KSKEQLNKEKKQELEKRLRD) are compositionally biased toward basic and acidic residues. A compositionally biased stretch (low complexity) spans 630–660 (SRLSESSTSSSASDVSNSSDSSSSDSSDSES). A coiled-coil region spans residues 829-917 (AKEERERALK…RREAMAGTID (89 aa)).

The protein belongs to the BET family.

It is found in the nucleus. Its function is as follows. Testis-specific chromatin protein that specifically binds histone H4 acetylated at 'Lys-5' and 'Lys-8' (H4K5ac and H4K8ac, respectively) and plays a key role in spermatogenesis. Required in late pachytene spermatocytes: plays a role in meiotic and post-meiotic cells by binding to acetylated histones at the promoter of specific meiotic and post-meiotic genes, facilitating their activation at the appropriate time. In the post-meiotic phase of spermatogenesis, binds to hyperacetylated histones and participates in their general removal from DNA. Also recognizes and binds a subset of butyrylated histones: able to bind histone H4 butyrylated at 'Lys-8' (H4K8ac), while it is not able to bind H4 butyrylated at 'Lys-5' (H4K5ac). This is Bromodomain testis-specific protein (brdt) from Xenopus tropicalis (Western clawed frog).